We begin with the raw amino-acid sequence, 294 residues long: Homeobox protein Nkx-2.5 (294 aa).

Disordered regions lie at residues 48-69 and 102-122; these read GSEP…PAAF and EQEK…RRKP. Residues 52 to 69 show a composition bias toward pro residues; the sequence is PALPELPEPPPAKPPAAF. Positions 102-114 are enriched in basic and acidic residues; sequence EQEKRELEDPERP. The segment at residues 119-178 is a DNA-binding region (homeobox); that stretch reads RRKPRVLFSQAQVYELERRFKQQKYLSAPERDHLANVLKLTSTQVKIWFQNRRYKCKRQR.

Belongs to the NK-2 homeobox family. Homodimer (via the homeobox); binds DNA as homodimer.

The protein resides in the nucleus. In terms of biological role, transcription factor required for the development of the heart and the spleen. Implicated in commitment to and/or differentiation of the myocardial lineage. Binds to the core DNA motif of promoter. This chain is Homeobox protein Nkx-2.5 (NKX-2.5), found in Gallus gallus (Chicken).